We begin with the raw amino-acid sequence, 501 residues long: COP9 signalosome complex subunit 3 (501 aa).

Residues 275–445 (RFEDALFLLE…VFWTELSPVP (171 aa)) enclose the PCI domain.

It belongs to the CSN3 family. Component of the CSN complex, probably composed of csn-1, csn-2, csn-3, csn-4, csn-5, csn-6 and csn-7. Within the complex it probably interacts directly with csn-2 and csn-4. May interact with itself.

It is found in the cytoplasm. The protein localises to the nucleus. Its function is as follows. Component of the COP9 signalosome complex (CSN), a complex involved in various cellular and developmental processes. The CSN complex is an essential regulator of the ubiquitin (Ubl) conjugation pathway by mediating the deneddylation of the cullin subunits of the SCF-type E3 ligase complexes, leading to decrease the Ubl ligase activity of SCF. The CSN complex plays an essential role in embryogenesis and oogenesis and is required to regulate microtubule stability in the early embryo. Mediates mei-3/katanin targeting for degradation at the meiosis to mitosis transition via deneddylation of cul-3. This chain is COP9 signalosome complex subunit 3 (csn-3), found in Caenorhabditis elegans.